A 132-amino-acid chain; its full sequence is Small ribosomal subunit protein bS16 (132 aa).

Basic and acidic residues predominate over residues 82 to 107; the sequence is DSKVQSKKEHNANKVKKEVKKPEAKK. The segment at 82 to 132 is disordered; it reads DSKVQSKKEHNANKVKKEVKKPEAKKAAASKPASKPSASKSASQKKTVSKK. Over residues 108-132 the composition is skewed to low complexity; the sequence is AAASKPASKPSASKSASQKKTVSKK.

This sequence belongs to the bacterial ribosomal protein bS16 family.

This is Small ribosomal subunit protein bS16 from Malacoplasma penetrans (strain HF-2) (Mycoplasma penetrans).